Consider the following 529-residue polypeptide: Tyrosinase (529 aa).

The first 18 residues, 1–18 (MLLAVLYCLLWSFQTSAG), serve as a signal peptide directing secretion. The Lumenal, melanosome portion of the chain corresponds to 19–476 (HFPRACVSSK…YLEQASRIWS (458 aa)). 3 N-linked (GlcNAc...) asparagine glycosylation sites follow: N86, N111, and N161. The Cu cation site is built by H180, H202, and H211. N-linked (GlcNAc...) asparagine glycosylation occurs at N230. Residues 287–313 (SLCNGTPEGPLRRNPGNHDKSRTPRLP) are disordered. Residue N337 is glycosylated (N-linked (GlcNAc...) asparagine). 2 residues coordinate Cu cation: H363 and H367. N-linked (GlcNAc...) asparagine glycosylation is present at N371. H390 contacts Cu cation. The chain crosses the membrane as a helical span at residues 477–497 (WLLGAAMVGAVLTALLAGLVS). At 498-529 (LLCRHKRKQLPEEKQPLLMEKEDYHSLYQSHL) the chain is on the cytoplasmic side.

It belongs to the tyrosinase family. In terms of assembly, forms an OPN3-dependent complex with DCT in response to blue light in melanocytes. Cu(2+) serves as cofactor. Glycosylated.

It localises to the melanosome membrane. It is found in the melanosome. It carries out the reaction 2 L-dopa + O2 = 2 L-dopaquinone + 2 H2O. The enzyme catalyses L-tyrosine + O2 = L-dopaquinone + H2O. It catalyses the reaction 2 5,6-dihydroxyindole-2-carboxylate + O2 = 2 indole-5,6-quinone-2-carboxylate + 2 H2O. In terms of biological role, this is a copper-containing oxidase that functions in the formation of pigments such as melanins and other polyphenolic compounds. Catalyzes the initial and rate limiting step in the cascade of reactions leading to melanin production from tyrosine. In addition to hydroxylating tyrosine to DOPA (3,4-dihydroxyphenylalanine), also catalyzes the oxidation of DOPA to DOPA-quinone, and possibly the oxidation of DHI (5,6-dihydroxyindole) to indole-5,6 quinone. This Homo sapiens (Human) protein is Tyrosinase.